Here is a 162-residue protein sequence, read N- to C-terminus: ATP synthase subunit b (162 aa).

The chain crosses the membrane as a helical span at residues I4 to S24.

It belongs to the ATPase B chain family. As to quaternary structure, F-type ATPases have 2 components, F(1) - the catalytic core - and F(0) - the membrane proton channel. F(1) has five subunits: alpha(3), beta(3), gamma(1), delta(1), epsilon(1). F(0) has three main subunits: a(1), b(2) and c(10-14). The alpha and beta chains form an alternating ring which encloses part of the gamma chain. F(1) is attached to F(0) by a central stalk formed by the gamma and epsilon chains, while a peripheral stalk is formed by the delta and b chains.

It is found in the cell membrane. In terms of biological role, f(1)F(0) ATP synthase produces ATP from ADP in the presence of a proton or sodium gradient. F-type ATPases consist of two structural domains, F(1) containing the extramembraneous catalytic core and F(0) containing the membrane proton channel, linked together by a central stalk and a peripheral stalk. During catalysis, ATP synthesis in the catalytic domain of F(1) is coupled via a rotary mechanism of the central stalk subunits to proton translocation. Its function is as follows. Component of the F(0) channel, it forms part of the peripheral stalk, linking F(1) to F(0). This Halalkalibacterium halodurans (strain ATCC BAA-125 / DSM 18197 / FERM 7344 / JCM 9153 / C-125) (Bacillus halodurans) protein is ATP synthase subunit b.